A 235-amino-acid chain; its full sequence is Adenosine 5'-phosphosulfate reductase (235 aa).

[4Fe-4S] cluster contacts are provided by Cys-121, Cys-122, Cys-204, and Cys-207. Cys-230 acts as the Nucleophile; cysteine thiosulfonate intermediate in catalysis.

Belongs to the PAPS reductase family. CysH subfamily. The cofactor is [4Fe-4S] cluster.

The protein resides in the cytoplasm. It carries out the reaction [thioredoxin]-disulfide + sulfite + AMP + 2 H(+) = adenosine 5'-phosphosulfate + [thioredoxin]-dithiol. It functions in the pathway sulfur metabolism; hydrogen sulfide biosynthesis; sulfite from sulfate. In terms of biological role, catalyzes the formation of sulfite from adenosine 5'-phosphosulfate (APS) using thioredoxin as an electron donor. This is Adenosine 5'-phosphosulfate reductase from Geobacillus thermodenitrificans (strain NG80-2).